A 605-amino-acid polypeptide reads, in one-letter code: Aspartate--tRNA(Asp/Asn) ligase (605 aa).

Glu-176 contributes to the L-aspartate binding site. The aspartate stretch occupies residues 200–203; the sequence is QQFK. Residues Arg-222 and His-452 each contribute to the L-aspartate site. 222–224 is a binding site for ATP; the sequence is RDE. Glu-490 contacts ATP. Arg-497 contacts L-aspartate. An ATP-binding site is contributed by 542–545; the sequence is GIDR.

It belongs to the class-II aminoacyl-tRNA synthetase family. Type 1 subfamily. In terms of assembly, homodimer.

Its subcellular location is the cytoplasm. The catalysed reaction is tRNA(Asx) + L-aspartate + ATP = L-aspartyl-tRNA(Asx) + AMP + diphosphate. Functionally, aspartyl-tRNA synthetase with relaxed tRNA specificity since it is able to aspartylate not only its cognate tRNA(Asp) but also tRNA(Asn). Reaction proceeds in two steps: L-aspartate is first activated by ATP to form Asp-AMP and then transferred to the acceptor end of tRNA(Asp/Asn). This Rickettsia prowazekii (strain Madrid E) protein is Aspartate--tRNA(Asp/Asn) ligase.